A 68-amino-acid polypeptide reads, in one-letter code: Large ribosomal subunit protein uL29 (68 aa).

The protein belongs to the universal ribosomal protein uL29 family.

The polypeptide is Large ribosomal subunit protein uL29 (rpl29) (Thermoplasma acidophilum (strain ATCC 25905 / DSM 1728 / JCM 9062 / NBRC 15155 / AMRC-C165)).